A 266-amino-acid polypeptide reads, in one-letter code: METLKSNKARLEYLINDMRRERNDNDVLVMPSSFEDLWELYRGLANVRPALPVSDEYLAVQDAMLSDLNRQHVTDLKDLKPIKGDNIFVWQGDITTLKIDAIVNAANSRFLGCMQANHDCIDNIIHTKAGVQVRLDCAEIIRQQGRNEGVGKAKITRGYNLPAKYIIHTVGPQIRRLPVSKLNQDLLAKCYLSCLKLADQQSLNHIAFCCISTGVFAFPQDEAAEIAVRTVESYLKETNSTLKVVFNVFTDKDLQLYKEAFNRDAE.

The region spanning 74–265 (TDLKDLKPIK…LYKEAFNRDA (192 aa)) is the Macro domain. ADP-D-ribose contacts are provided by aspartate 93, isoleucine 94, and asparagine 107. Cysteine 113, histidine 118, and cysteine 120 together coordinate Zn(2+). 7 residues coordinate ADP-D-ribose: cysteine 120, isoleucine 121, aspartate 122, serine 212, threonine 213, glycine 214, and phenylalanine 216.

The protein belongs to the MacroD-type family. Zn-Macro subfamily. The cofactor is Zn(2+).

The catalysed reaction is 4-O-(ADP-D-ribosyl)-L-aspartyl-[protein] + H2O = L-aspartyl-[protein] + ADP-D-ribose + H(+). Functionally, ADP-ribosylhydrolase that specifically reverses the SirTM-mediated mono-ADP-ribosylation at an asparatate residue of GcvH-L, by releasing ADP-ribose from the target protein. May play a role in the regulation of the response to host-induced oxidative stress. This Staphylococcus aureus (strain MRSA252) protein is Protein-ADP-ribose hydrolase.